Here is a 242-residue protein sequence, read N- to C-terminus: Probable transcriptional regulatory protein NMB1648 (242 aa).

The protein belongs to the TACO1 family.

The protein localises to the cytoplasm. The sequence is that of Probable transcriptional regulatory protein NMB1648 from Neisseria meningitidis serogroup B (strain ATCC BAA-335 / MC58).